A 553-amino-acid chain; its full sequence is Putative transport protein YidE (553 aa).

5 consecutive transmembrane segments (helical) span residues 4–24 (IALT…IGNV), 28–48 (GIGL…HFVS), 65–85 (FGLI…FFAS), 95–115 (LFAV…HKLF), and 158–178 (MSYA…MWML). RCK C-terminal domains lie at 191–276 (QQHE…VIGQ) and 279–361 (DTSL…VLGN). The next 5 membrane-spanning stretches (helical) occupy residues 371–391 (MLPV…PVFV), 394–414 (FPAA…LILG), 439–459 (IVLF…NTLV), 464–484 (LSWI…VGIL), and 533–553 (LVMF…WSIG).

This sequence belongs to the AAE transporter (TC 2.A.81) family. YidE subfamily.

It is found in the cell membrane. This Shigella dysenteriae serotype 1 (strain Sd197) protein is Putative transport protein YidE.